A 37-amino-acid polypeptide reads, in one-letter code: Esculentin-2JDb (37 aa).

Cysteines 31 and 37 form a disulfide.

Expressed by the skin glands.

Its subcellular location is the secreted. Has antibacterial activity against E.coli and S.aureus strains. The polypeptide is Esculentin-2JDb (Odorrana jingdongensis (Jingdong frog)).